Consider the following 89-residue polypeptide: Small ribosomal subunit protein uS15 (89 aa).

The segment covering 1 to 21 has biased composition (basic and acidic residues); sequence MAISQERKNEIIKEYARHEGD. Positions 1–24 are disordered; the sequence is MAISQERKNEIIKEYARHEGDTGS.

It belongs to the universal ribosomal protein uS15 family. As to quaternary structure, part of the 30S ribosomal subunit. Forms a bridge to the 50S subunit in the 70S ribosome, contacting the 23S rRNA.

Its function is as follows. One of the primary rRNA binding proteins, it binds directly to 16S rRNA where it helps nucleate assembly of the platform of the 30S subunit by binding and bridging several RNA helices of the 16S rRNA. In terms of biological role, forms an intersubunit bridge (bridge B4) with the 23S rRNA of the 50S subunit in the ribosome. The chain is Small ribosomal subunit protein uS15 from Enterococcus faecalis (strain ATCC 700802 / V583).